The chain runs to 692 residues: DNA repair protein RAD34 (692 aa).

The interval 1–38 is disordered; the sequence is MAKRLLESSQNDQANRKNSKIEKKEVSFYEEEETDDSF. Acidic residues predominate over residues 28–38; that stretch reads FYEEEETDDSF.

Belongs to the XPC family.

Its subcellular location is the nucleus. In terms of biological role, involved in nucleotide excision repair (NER) of damaged ribosomal DNA (rDNA). Required for the repair of the RNA polymerase I-transcribed strand of rDNA. In Saccharomyces cerevisiae (strain ATCC 204508 / S288c) (Baker's yeast), this protein is DNA repair protein RAD34 (RAD34).